The chain runs to 285 residues: Probable endonuclease 4 (285 aa).

Zn(2+) is bound by residues histidine 69, histidine 109, glutamate 145, aspartate 179, histidine 182, histidine 216, aspartate 229, histidine 231, and glutamate 261.

This sequence belongs to the AP endonuclease 2 family. The cofactor is Zn(2+).

It catalyses the reaction Endonucleolytic cleavage to 5'-phosphooligonucleotide end-products.. In terms of biological role, endonuclease IV plays a role in DNA repair. It cleaves phosphodiester bonds at apurinic or apyrimidinic (AP) sites, generating a 3'-hydroxyl group and a 5'-terminal sugar phosphate. This is Probable endonuclease 4 from Salmonella agona (strain SL483).